The following is a 478-amino-acid chain: Ribulose bisphosphate carboxylase large chain (478 aa).

A propeptide spanning residues M1–S2 is cleaved from the precursor. P3 bears the N-acetylproline mark. K14 bears the N6,N6,N6-trimethyllysine mark. Residues N123 and T173 each contribute to the substrate site. The Proton acceptor role is filled by K175. K177 contributes to the substrate binding site. Residues K201, D203, and E204 each coordinate Mg(2+). Residue K201 is modified to N6-carboxylysine. H294 serves as the catalytic Proton acceptor. The substrate site is built by R295, H327, and S379.

It belongs to the RuBisCO large chain family. Type I subfamily. In terms of assembly, heterohexadecamer of 8 large chains and 8 small chains; disulfide-linked. The disulfide link is formed within the large subunit homodimers. Mg(2+) serves as cofactor. Post-translationally, the disulfide bond which can form in the large chain dimeric partners within the hexadecamer appears to be associated with oxidative stress and protein turnover.

Its subcellular location is the plastid. It localises to the chloroplast. The catalysed reaction is 2 (2R)-3-phosphoglycerate + 2 H(+) = D-ribulose 1,5-bisphosphate + CO2 + H2O. It catalyses the reaction D-ribulose 1,5-bisphosphate + O2 = 2-phosphoglycolate + (2R)-3-phosphoglycerate + 2 H(+). RuBisCO catalyzes two reactions: the carboxylation of D-ribulose 1,5-bisphosphate, the primary event in carbon dioxide fixation, as well as the oxidative fragmentation of the pentose substrate in the photorespiration process. Both reactions occur simultaneously and in competition at the same active site. This Drimys granadensis protein is Ribulose bisphosphate carboxylase large chain.